The sequence spans 404 residues: Exodeoxyribonuclease 7 large subunit (404 aa).

Belongs to the XseA family. As to quaternary structure, heterooligomer composed of large and small subunits.

It is found in the cytoplasm. The catalysed reaction is Exonucleolytic cleavage in either 5'- to 3'- or 3'- to 5'-direction to yield nucleoside 5'-phosphates.. In terms of biological role, bidirectionally degrades single-stranded DNA into large acid-insoluble oligonucleotides, which are then degraded further into small acid-soluble oligonucleotides. This chain is Exodeoxyribonuclease 7 large subunit, found in Caldanaerobacter subterraneus subsp. tengcongensis (strain DSM 15242 / JCM 11007 / NBRC 100824 / MB4) (Thermoanaerobacter tengcongensis).